The following is a 367-amino-acid chain: MSFRTLELFAGIAGISHGLRGISTPVAFVEINEDAQKFLKTKFSDASVFNDVTKFTKSDFPEDIDMITAGFPCTGFSIAGSRTGFEHKESGLFADVVRITEEYKPKIVFLENSHMLSHTYNLDVVVKKMDEIGYFCKWVTCRASIIGAHHQRHRWFCLAIRKDYEPEEIIVSVNATKFDWENNEPPCQVDNKSYENSTLVRLAGYSVVPDQIRYAFTGLFTGDFESSWKTTLTPGTIIGTEHKKMKGTYDKVINGYYENDVYYSFSRKEVHRAPLNISVKPRDIPEKHNGKTLVDREMIKKYWCTPCASYGTATAGCNVLTDRQSHALPTQVRFSYRGVCGRHLSGIWCAWLMGYDQEYLGYLVQYD.

Residues Phe-3–Asp-367 enclose the SAM-dependent MTase C5-type domain. Cys-73 is an active-site residue.

It belongs to the class I-like SAM-binding methyltransferase superfamily. C5-methyltransferase family.

It catalyses the reaction a 2'-deoxycytidine in DNA + S-adenosyl-L-methionine = a 5-methyl-2'-deoxycytidine in DNA + S-adenosyl-L-homocysteine + H(+). In terms of biological role, a methylase that recognizes the double-stranded sequence 5'-RGCY-3', methylates C-3 on both strands, and protects the DNA from cleavage by the CviJI endonuclease. The polypeptide is Type II methyltransferase M.CviJI (Chlorella (PBCV-IL3A)).